Consider the following 591-residue polypeptide: Indole-3-acetic acid-amido synthetase GH3.10 (591 aa).

It belongs to the IAA-amido conjugating enzyme family. In terms of tissue distribution, expressed in cotyledons and hypocotyls.

In terms of biological role, catalyzes the synthesis of indole-3-acetic acid (IAA)-amino acid conjugates, providing a mechanism for the plant to cope with the presence of excess auxin. Involved in red light-specific hypocotyl elongation. May act downstream of a red light signal transduction and determine the degree of hypocotyl elongation. This Arabidopsis thaliana (Mouse-ear cress) protein is Indole-3-acetic acid-amido synthetase GH3.10.